Consider the following 132-residue polypeptide: Ribosome-binding factor A (132 aa).

The protein belongs to the RbfA family. In terms of assembly, monomer. Binds 30S ribosomal subunits, but not 50S ribosomal subunits or 70S ribosomes.

It localises to the cytoplasm. Functionally, one of several proteins that assist in the late maturation steps of the functional core of the 30S ribosomal subunit. Associates with free 30S ribosomal subunits (but not with 30S subunits that are part of 70S ribosomes or polysomes). Required for efficient processing of 16S rRNA. May interact with the 5'-terminal helix region of 16S rRNA. The chain is Ribosome-binding factor A from Treponema denticola (strain ATCC 35405 / DSM 14222 / CIP 103919 / JCM 8153 / KCTC 15104).